The primary structure comprises 708 residues: Ubiquitin thioesterase Zranb1 (708 aa).

The RanBP2-type 1 zinc-finger motif lies at Glu-3–Ser-33. Residues Cys-10, Cys-13, Cys-24, and Cys-27 each coordinate Zn(2+). Positions Thr-38–Arg-73 are disordered. 2 RanBP2-type zinc fingers span residues Asn-84 to Thr-113 and Arg-149 to Asn-178. Zn(2+)-binding residues include Cys-90, Cys-93, Cys-104, Cys-107, Cys-155, Cys-158, Cys-169, and Cys-172. The segment at Arg-202–Ser-224 is disordered. A compositionally biased stretch (polar residues) spans Ser-209–Thr-219. 2 ANK repeats span residues Lys-260–Asp-290 and Tyr-313–Ala-340. Residues Leu-432–Met-592 enclose the OTU domain. Residue Cys-443 is the Nucleophile of the active site. The active-site Proton acceptor is the His-585.

The protein belongs to the peptidase C64 family. As to quaternary structure, interacts with TRAF6. Interacts with APC.

The protein resides in the cytoplasm. The protein localises to the nucleus. The enzyme catalyses Thiol-dependent hydrolysis of ester, thioester, amide, peptide and isopeptide bonds formed by the C-terminal Gly of ubiquitin (a 76-residue protein attached to proteins as an intracellular targeting signal).. Its function is as follows. Ubiquitin thioesterase, which specifically hydrolyzes 'Lys-29'-linked and 'Lys-33'-linked diubiquitin. Also cleaves 'Lys-63'-linked chains, but with 40-fold less efficiency compared to 'Lys-29'-linked ones. Positive regulator of the Wnt signaling pathway that deubiquitinates APC protein, a negative regulator of Wnt-mediated transcription. Acts as a regulator of autophagy by mediating deubiquitination of PIK3C3/VPS34, thereby promoting autophagosome maturation. Plays a role in the regulation of cell morphology and cytoskeletal organization. Required in the stress fiber dynamics and cell migration. The protein is Ubiquitin thioesterase Zranb1 of Mus musculus (Mouse).